The chain runs to 1108 residues: Probable arabinosyltransferase A (1108 aa).

Transmembrane regions (helical) follow at residues Ile12–Leu34, Ile204–Leu223, Val258–Gly280, Val334–Leu356, Ala368–Phe387, Ile397–Leu414, Ala421–Ala443, Gly463–Val482, Phe531–Val553, Trp582–Cys604, Thr616–Tyr638, Ile653–Trp675, and Val696–Thr718. The segment at Pro804–Gly825 is disordered.

The protein belongs to the emb family.

Its subcellular location is the cell membrane. Functionally, arabinosyl transferase responsible for the polymerization of arabinose into the arabinan of arabinogalactan. The protein is Probable arabinosyltransferase A (embA) of Mycobacterium avium.